The chain runs to 147 residues: METLITISRWLAKQHVVTWCVQQEGELWCANAFYLFDAQKVAFYILTEEKTRHAQMSGPQAAVAGTVNGQPKTVALIRGVQFKGEIRRLEGEESDLARKAYNRRFPVARMLSAPVWEIRLDEIKFTDNTLGFGKKMIWLRGSGTEQA.

It belongs to the UPF0306 family.

The sequence is that of UPF0306 protein YhbP from Shigella dysenteriae serotype 1 (strain Sd197).